The primary structure comprises 268 residues: Nickel import ATP-binding protein NikE (268 aa).

One can recognise an ABC transporter domain in the interval 4–252 (LNVSDLSHHY…SSDAGRVLQN (249 aa)). 45 to 52 (GRSGCGKS) serves as a coordination point for ATP.

The protein belongs to the ABC transporter superfamily. Nickel importer (TC 3.A.1.5.3) family. In terms of assembly, the complex is composed of two ATP-binding proteins (NikD and NikE), two transmembrane proteins (NikB and NikC) and a solute-binding protein (NikA).

It localises to the cell inner membrane. The catalysed reaction is Ni(2+)(out) + ATP + H2O = Ni(2+)(in) + ADP + phosphate + H(+). Part of the ABC transporter complex NikABCDE involved in nickel import. Responsible for energy coupling to the transport system. The polypeptide is Nickel import ATP-binding protein NikE (Shigella dysenteriae serotype 1 (strain Sd197)).